The sequence spans 598 residues: Arginine--tRNA ligase (598 aa).

The short motif at 135–145 (ANPTGPIHIGG) is the 'HIGH' region element. Residues 229-248 (VDGGTDEKGEPLGEGDSEQR) form a disordered region. Residues 231–248 (GGTDEKGEPLGEGDSEQR) show a composition bias toward basic and acidic residues.

Belongs to the class-I aminoacyl-tRNA synthetase family. Monomer.

The protein resides in the cytoplasm. The catalysed reaction is tRNA(Arg) + L-arginine + ATP = L-arginyl-tRNA(Arg) + AMP + diphosphate. The polypeptide is Arginine--tRNA ligase (Bifidobacterium animalis subsp. lactis (strain AD011)).